Reading from the N-terminus, the 214-residue chain is Pyridoxine/pyridoxamine 5'-phosphate oxidase (214 aa).

Substrate contacts are provided by residues 9 to 12 (RREY) and lysine 67. FMN-binding positions include 62-67 (RTVLLK), 77-78 (YS), arginine 83, lysine 84, and glutamine 106. Residues tyrosine 124, arginine 128, and serine 132 each coordinate substrate. FMN-binding positions include 141–142 (QS) and tryptophan 186. A substrate-binding site is contributed by 192-194 (RLH). FMN is bound at residue arginine 196.

The protein belongs to the pyridoxamine 5'-phosphate oxidase family. As to quaternary structure, homodimer. FMN is required as a cofactor.

The catalysed reaction is pyridoxamine 5'-phosphate + O2 + H2O = pyridoxal 5'-phosphate + H2O2 + NH4(+). It carries out the reaction pyridoxine 5'-phosphate + O2 = pyridoxal 5'-phosphate + H2O2. Its pathway is cofactor metabolism; pyridoxal 5'-phosphate salvage; pyridoxal 5'-phosphate from pyridoxamine 5'-phosphate: step 1/1. It functions in the pathway cofactor metabolism; pyridoxal 5'-phosphate salvage; pyridoxal 5'-phosphate from pyridoxine 5'-phosphate: step 1/1. Its function is as follows. Catalyzes the oxidation of either pyridoxine 5'-phosphate (PNP) or pyridoxamine 5'-phosphate (PMP) into pyridoxal 5'-phosphate (PLP). The chain is Pyridoxine/pyridoxamine 5'-phosphate oxidase from Porphyromonas gingivalis (strain ATCC BAA-308 / W83).